Consider the following 416-residue polypeptide: L-lysine 2,3-aminomutase (416 aa).

The Radical SAM core domain maps to 111–322 (HRYPDRVLLL…EGLRGHTSGY (212 aa)). C125, C129, and C132 together coordinate [4Fe-4S] cluster. A Zn(2+)-binding site is contributed by C268. Residue K337 is modified to N6-(pyridoxal phosphate)lysine. Residues C375, C377, and C380 each coordinate Zn(2+).

The protein belongs to the radical SAM superfamily. KamA family. In terms of assembly, homohexamer; trimer of dimers. Forms a homotetramer in crystal. [4Fe-4S] cluster serves as cofactor. Requires pyridoxal 5'-phosphate as cofactor. It depends on Co(2+) as a cofactor. The cofactor is Zn(2+).

It carries out the reaction L-lysine = (3S)-3,6-diaminohexanoate. Its pathway is amino-acid degradation; L-lysine degradation via acetate pathway. With respect to regulation, the enzyme is activated by S-adenosyl-methionine. Activity is dependent on the levels of Fe(2+), S(2-) and Co(2+). Activity is stimulated by addition of EDTA. S-adenosylhomocysteine competitively inhibits the activity whereas 5'-methylthioadenosine is not inhibitory in the presence of S-adenosylmethionine. Competitively inhibited by 4-thialysine. Inhibited by sodium borohydride (1 mM) when added with 2 mM dithionate. Moderately inhibited by beta-mercaptoethanol (30 mM) along with dithionate. Higher concentrations of Fe(2+) partially inhibit the activity and Co(2+) at 1 mM is a strong inhibitor. Hydroxylamine, isonicotinic acid hydrazide inhibit effectively, in addition, hydrazine, D-penicillamine and D-cycloserine are also inhibitory at high concentrations. Functionally, catalyzes the interconversion of L-alpha-lysine and L-beta-lysine. The polypeptide is L-lysine 2,3-aminomutase (kamA) (Clostridium subterminale).